The chain runs to 382 residues: Ferredoxin--NADP reductase, root isozyme 2, chloroplastic (382 aa).

The N-terminal 64 residues, 1 to 64 (MSHSAVSQAG…DGKRYPSTTI (64 aa)), are a transit peptide targeting the chloroplast. The region spanning 97–225 (KESYTAKIVS…TGPSGKVMLL (129 aa)) is the FAD-binding FR-type domain. A disulfide bridge links Cys-200 with Cys-205. Ser-201 bears the Phosphoserine mark. Thr-233 bears the Phosphothreonine mark. 235–253 (IMIATGTGVAPYRGYLRRM) provides a ligand contact to NADP(+).

It belongs to the ferredoxin--NADP reductase type 1 family. The cofactor is FAD. Expressed in shoots and roots. More abundant in roots than RFNR1.

It localises to the plastid. It is found in the chloroplast. The catalysed reaction is 2 reduced [2Fe-2S]-[ferredoxin] + NADP(+) + H(+) = 2 oxidized [2Fe-2S]-[ferredoxin] + NADPH. Maintains the supply of reduced ferredoxin under non-photosynthetic conditions. The sequence is that of Ferredoxin--NADP reductase, root isozyme 2, chloroplastic (RFNR2) from Arabidopsis thaliana (Mouse-ear cress).